The sequence spans 159 residues: Developmental pluripotency-associated protein 3 (159 aa).

2 disordered regions span residues 1 to 31 and 140 to 159; these read MDPSQFNPTYIPGSPQMLTEENSRDDSGASQ and GWDPSENARIGNQDTKPLQP. The segment covering 149–159 has biased composition (polar residues); the sequence is IGNQDTKPLQP.

In terms of tissue distribution, low expression in testis, ovary and thymus. Expressed in embryonic stem and carcinoma cells. Highly expressed in testicular germ cell tumors.

It localises to the nucleus. It is found in the cytoplasm. Its function is as follows. Primordial germ cell (PGCs)-specific protein involved in epigenetic chromatin reprogramming in the zygote following fertilization. In zygotes, DNA demethylation occurs selectively in the paternal pronucleus before the first cell division, while the adjacent maternal pronucleus and certain paternally-imprinted loci are protected from this process. Participates in protection of DNA methylation in the maternal pronucleus by preventing conversion of 5mC to 5hmC: specifically recognizes and binds histone H3 dimethylated at 'Lys-9' (H3K9me2) on maternal genome, and protects maternal genome from TET3-mediated conversion to 5hmC and subsequent DNA demethylation. Does not bind paternal chromatin, which is mainly packed into protamine and does not contain much H3K9me2 mark. Also protects imprinted loci that are marked with H3K9me2 in mature sperm from DNA demethylation in early embryogenesis. May be important for the totipotent/pluripotent states continuing through preimplantation development. Also involved in chromatin condensation in oocytogenesis. In Homo sapiens (Human), this protein is Developmental pluripotency-associated protein 3 (DPPA3).